A 131-amino-acid chain; its full sequence is Outer membrane protein assembly factor BamE (131 aa).

Positions 1–16 (MRNLLLVAAVALSTAG) are cleaved as a signal peptide. The N-palmitoyl cysteine moiety is linked to residue Cys17. A lipid anchor (S-diacylglycerol cysteine) is attached at Cys17. The disordered stretch occupies residues 112-131 (SAPKQFGRNLARDKKKQRGR).

Belongs to the BamE family. As to quaternary structure, part of the Bam complex.

The protein resides in the cell outer membrane. Part of the outer membrane protein assembly complex, which is involved in assembly and insertion of beta-barrel proteins into the outer membrane. The chain is Outer membrane protein assembly factor BamE from Xanthomonas campestris pv. campestris (strain ATCC 33913 / DSM 3586 / NCPPB 528 / LMG 568 / P 25).